Consider the following 474-residue polypeptide: 3-isopropylmalate dehydratase large subunit (474 aa).

[4Fe-4S] cluster is bound by residues Cys353, Cys413, and Cys416.

It belongs to the aconitase/IPM isomerase family. LeuC type 1 subfamily. In terms of assembly, heterodimer of LeuC and LeuD. Requires [4Fe-4S] cluster as cofactor.

It carries out the reaction (2R,3S)-3-isopropylmalate = (2S)-2-isopropylmalate. It functions in the pathway amino-acid biosynthesis; L-leucine biosynthesis; L-leucine from 3-methyl-2-oxobutanoate: step 2/4. Functionally, catalyzes the isomerization between 2-isopropylmalate and 3-isopropylmalate, via the formation of 2-isopropylmaleate. The sequence is that of 3-isopropylmalate dehydratase large subunit from Roseiflexus sp. (strain RS-1).